The sequence spans 231 residues: GSK-3-binding protein FRAT2 (231 aa).

Disordered stretches follow at residues 1–24 (MPCRREEEEEAGDEAEGEEDDDSF) and 53–109 (DTAH…PGAV). Positions 7–23 (EEEEAGDEAEGEEDDDS) are enriched in acidic residues. Residues 172 to 194 (DPHRLLQQLVLSGNLIKEAVRRL) are involved in GSK-3 binding. The tract at residues 203-231 (ATSPASAPGSGGGRSGPDSVTLQPSGAWL) is disordered.

It belongs to the GSK-3-binding protein family. In terms of assembly, binds GSK-3 and prevents GSK-3-dependent phosphorylation.

In terms of biological role, positively regulates the Wnt signaling pathway by stabilizing beta-catenin through the association with GSK-3. This Mus musculus (Mouse) protein is GSK-3-binding protein FRAT2 (Frat2).